The sequence spans 243 residues: MLTFLIPTAKEMVIPKESYPHLLPQPSQAILKAMAAMTTEDLAKAYRIKEEAAKKEQQRWQDMTSQQSLAYPAYQLFNGLMYRHIKRDKLTTQEQAYLTQQVYITSSFYGIIPANHPIAEHRHDFHTRIKIEGQSLKSYWRPCYNQFAKEHPQVISLLSSEFDDVFSKDCKQLWIGPKFMAEKEGQFKTHSTISKKARGAFLTACMENNCQTVDSLKSLVFAGFYYHPDLSTDHEFVYIKKEA.

The protein belongs to the UPF0246 family.

This is UPF0246 protein MGAS10750_Spy1880 from Streptococcus pyogenes serotype M4 (strain MGAS10750).